Here is a 524-residue protein sequence, read N- to C-terminus: RNA-binding protein 39 (524 aa).

A disordered region spans residues 1–146; that stretch reads MADDIDIEAM…PVREPIDNLT (146 aa). Position 2 is an N-acetylalanine (Ala-2). Residues 14–32 show a composition bias toward basic and acidic residues; it reads PYKKDENKLSSANGHEERS. Composition is skewed to basic residues over residues 33–56 and 64–95; these read KKRKKSKSRSRSHERKRSKSKERK and KKSKSRERKRSRSKERRRSRSRSRDRRFRGRY. Tyr-95 carries the post-translational modification Phosphotyrosine. Residues Ser-97 and Ser-100 each carry the phosphoserine modification. Lys-111 participates in a covalent cross-link: Glycyl lysine isopeptide (Lys-Gly) (interchain with G-Cter in SUMO2). Ser-117 bears the Phosphoserine mark. Residue Lys-119 forms a Glycyl lysine isopeptide (Lys-Gly) (interchain with G-Cter in SUMO2) linkage. The segment covering 119–130 has biased composition (basic residues); it reads KLSRRRSRSKSP. Phosphoserine is present on residues Ser-121 and Ser-136. Residues 131-146 are compositionally biased toward basic and acidic residues; the sequence is FRKDKSPVREPIDNLT. Residue Thr-146 is modified to Phosphothreonine. The RRM 1 domain maps to 153 to 230; sequence RTVFCMQLAA…VPIIVQASQA (78 aa). A Glycyl lysine isopeptide (Lys-Gly) (interchain with G-Cter in SUMO2) cross-link involves residue Lys-244. One can recognise an RRM 2 domain in the interval 250–328; it reads MRLYVGSLHF…RPMKVGHVTE (79 aa). The interval 291–355 is activating domain; sequence KGYGFITFSD…RTGIDLGTTG (65 aa). Positions 291 to 400 are interaction with JUN; it reads KGYGFITFSD…ADLQTRLSQQ (110 aa). Residues Ser-334, Ser-337, and Ser-341 each carry the phosphoserine modification. The segment at 355–400 is interaction with ESR1 and ESR2; that stretch reads GRLQLMARLAEGTGLQIPPAAQQALQMSGSLAFGAVADLQTRLSQQ. The tract at residues 400 to 524 is interaction with NCOA6; it reads QTEASALAAA…ATQLLVPSRR (125 aa). In terms of domain architecture, RRM 3 spans 439-502; the sequence is EIKDDVIEEC…KMITAAYVPL (64 aa).

The protein belongs to the splicing factor SR family. In terms of assembly, interacts with NCOA6 and JUN. Interacts with ESR1 and ESR2, in the presence of estradiol (E2). Interacts with RSRC1 (via Arg/Ser-rich domain). Interacts with SF3B1. Interacts with ZNF106 (via N-terminus).

It is found in the nucleus speckle. In terms of biological role, RNA-binding protein that acts as a pre-mRNA splicing factor. Acts by promoting exon inclusion via regulation of exon cassette splicing. Also acts as a transcriptional coactivator for steroid nuclear receptors ESR1/ER-alpha and ESR2/ER-beta, and JUN/AP-1, independently of the pre-mRNA splicing factor activity. The sequence is that of RNA-binding protein 39 (RBM39) from Pongo abelii (Sumatran orangutan).